Here is a 445-residue protein sequence, read N- to C-terminus: Baccatin III:3-amino-3-phenylpropanoyltransferase (445 aa).

It belongs to the plant acyltransferase family.

It catalyses the reaction (3R)-3-amino-3-phenylpropanoyl-CoA + baccatin III = 3'-N-debenzoyl-2'-deoxytaxol + CoA. The protein operates within alkaloid biosynthesis; taxol biosynthesis. Acyltransferase involved in taxol biosynthesis. Catalyzes the selective 13-O-acylation of baccatin III with (3R)-3-amino-3-phenylpropanoyl-CoA as the acyl donor to form 3'-N-debenzoyl-2'-deoxytaxol. The chain is Baccatin III:3-amino-3-phenylpropanoyltransferase from Taxus cuspidata (Japanese yew).